The following is a 578-amino-acid chain: Membrane protein insertase YidC (578 aa).

Residues 3–23 (IQRSILIVALAVVSYLLVLQW) form a helical membrane-spanning segment. The segment at 34–72 (AASASMNTTQGLPDTPSASGTSSDVPTAQSSAAGSEAAD) is disordered. The span at 37–66 (ASMNTTQGLPDTPSASGTSSDVPTAQSSAA) shows a compositional bias: polar residues. The next 5 helical transmembrane spans lie at 361–381 (LELT…FWLL), 387–407 (LIGN…LAFF), 457–477 (LGGC…YWVL), 500–520 (PFFI…MLNP), and 535–555 (PIIF…YWVV).

The protein belongs to the OXA1/ALB3/YidC family. Type 1 subfamily. Interacts with the Sec translocase complex via SecD. Specifically interacts with transmembrane segments of nascent integral membrane proteins during membrane integration.

The protein localises to the cell inner membrane. Functionally, required for the insertion and/or proper folding and/or complex formation of integral membrane proteins into the membrane. Involved in integration of membrane proteins that insert both dependently and independently of the Sec translocase complex, as well as at least some lipoproteins. Aids folding of multispanning membrane proteins. The polypeptide is Membrane protein insertase YidC (Pseudomonas aeruginosa (strain LESB58)).